A 200-amino-acid polypeptide reads, in one-letter code: Ras-related protein RHN1 (200 aa).

Residues 17-25, 36-42, 65-69, 123-126, and 153-155 contribute to the GTP site; these read GDMGAGKSS, LEFQEST, DTAGQ, NKAD, and SAK. The Effector region motif lies at 39–47; it reads QESTIGAAF. S-geranylgeranyl cysteine attachment occurs at residues Cys-198 and Cys-199.

The protein belongs to the small GTPase superfamily. Rab family. As to expression, high in stem, root, and inflorescence.

It is found in the cell membrane. Protein transport. Probably involved in vesicular traffic. The sequence is that of Ras-related protein RHN1 (RHN1) from Nicotiana plumbaginifolia (Leadwort-leaved tobacco).